The chain runs to 261 residues: Phosphatidylglycerol--prolipoprotein diacylglyceryl transferase (261 aa).

4 consecutive transmembrane segments (helical) span residues 17 to 37 (FGIHWYGLMYLIGFLAFLWLG), 60 to 80 (ALFYGALGVILGGRLGYALFY), 92 to 112 (ILFLWQGGMSFHGGFLGVMVA), and 121 to 141 (GLTFFGIMDFVAPLVPVGLGA). A 1,2-diacyl-sn-glycero-3-phospho-(1'-sn-glycerol) is bound at residue R143. The next 3 membrane-spanning stretches (helical) occupy residues 175–195 (PSQLYEFLLEGVALFILLWWY), 203–223 (GSVSALFLIGYGSFRFLVEFT), and 237–257 (LSMGQWLSLPMVIAGVWLLIV).

This sequence belongs to the Lgt family.

The protein localises to the cell inner membrane. It catalyses the reaction L-cysteinyl-[prolipoprotein] + a 1,2-diacyl-sn-glycero-3-phospho-(1'-sn-glycerol) = an S-1,2-diacyl-sn-glyceryl-L-cysteinyl-[prolipoprotein] + sn-glycerol 1-phosphate + H(+). It functions in the pathway protein modification; lipoprotein biosynthesis (diacylglyceryl transfer). Catalyzes the transfer of the diacylglyceryl group from phosphatidylglycerol to the sulfhydryl group of the N-terminal cysteine of a prolipoprotein, the first step in the formation of mature lipoproteins. In Methylobacillus flagellatus (strain ATCC 51484 / DSM 6875 / VKM B-1610 / KT), this protein is Phosphatidylglycerol--prolipoprotein diacylglyceryl transferase.